Consider the following 347-residue polypeptide: MGDQPVDLSETALAEAVGAARQAFARAGDLDALARLKTEHLGDRAPLALARQALGGVPKDQRADAGRRVNAARAQAQQAYDERLDVLRAERDAAVLVAERIDVTLPSTRQPVGARHPITILAEHIADTFIAMGWELAEGPEVEAEQFNFDALNFPADHPARSEQDTFYIAPEGSRQLLRTHTSPVQVRTLLARELPVYVISIGRTFRTDELDATHTPVFHQVEGLAVDRGLSMAHLRGTLDAFARAEFGPQARTRIRPHFFPFTEPSAEVDVWFVGKKGGAGWVEWGGCGMVHPNVLRAAGIDPDVYSGFAFGMGLERTLQFRNGIPDMRDMVEGDVRFLLPFGVGA.

Glu265 contacts Mg(2+).

The protein belongs to the class-II aminoacyl-tRNA synthetase family. Phe-tRNA synthetase alpha subunit type 1 subfamily. In terms of assembly, tetramer of two alpha and two beta subunits. Mg(2+) is required as a cofactor.

It is found in the cytoplasm. The enzyme catalyses tRNA(Phe) + L-phenylalanine + ATP = L-phenylalanyl-tRNA(Phe) + AMP + diphosphate + H(+). This Mycolicibacterium paratuberculosis (strain ATCC BAA-968 / K-10) (Mycobacterium paratuberculosis) protein is Phenylalanine--tRNA ligase alpha subunit.